Here is a 400-residue protein sequence, read N- to C-terminus: Acetate kinase (400 aa).

Residue Asn10 participates in Mg(2+) binding. An ATP-binding site is contributed by Lys17. Arg91 serves as a coordination point for substrate. The active-site Proton donor/acceptor is Asp150. Residues 210–214, 285–287, and 333–337 contribute to the ATP site; these read HLGSG, DCR, and GIGEN. Glu387 contributes to the Mg(2+) binding site.

Belongs to the acetokinase family. Homodimer. Requires Mg(2+) as cofactor. It depends on Mn(2+) as a cofactor.

Its subcellular location is the cytoplasm. The enzyme catalyses acetate + ATP = acetyl phosphate + ADP. The protein operates within metabolic intermediate biosynthesis; acetyl-CoA biosynthesis; acetyl-CoA from acetate: step 1/2. In terms of biological role, catalyzes the formation of acetyl phosphate from acetate and ATP. Can also catalyze the reverse reaction. The polypeptide is Acetate kinase (Baumannia cicadellinicola subsp. Homalodisca coagulata).